A 364-amino-acid chain; its full sequence is Fructose-bisphosphate aldolase B (364 aa).

N-acetylalanine is present on Ala2. At Lys13 the chain carries N6-succinyllysine. Residue Ser36 is modified to Phosphoserine. Position 39 is a phosphothreonine (Thr39). Residue Arg43 coordinates beta-D-fructose 1,6-bisphosphate. Phosphoserine is present on Ser89. A Phosphothreonine modification is found at Thr119. Lys121 is subject to N6-succinyllysine. Ser132 is subject to Phosphoserine. Catalysis depends on Glu188, which acts as the Proton acceptor. Residue Lys230 is the Schiff-base intermediate with dihydroxyacetone-P of the active site. Ser272, Ser276, Ser299, and Ser301 each carry phosphoserine. A beta-D-fructose 1,6-bisphosphate-binding site is contributed by 272-274 (SGG). A beta-D-fructose 1,6-bisphosphate-binding site is contributed by Arg304. Phosphoserine is present on Ser309. Position 317 is an N6-succinyllysine (Lys317).

The protein belongs to the class I fructose-bisphosphate aldolase family. Homotetramer. Interacts with BBS1, BBS2, BBS4 and BBS7. Forms a ternary complex with G6PD and TP53; this interaction is direct.

The protein localises to the cytoplasm. It is found in the cytosol. The protein resides in the cytoskeleton. It localises to the microtubule organizing center. Its subcellular location is the centrosome. The protein localises to the centriolar satellite. It carries out the reaction beta-D-fructose 1,6-bisphosphate = D-glyceraldehyde 3-phosphate + dihydroxyacetone phosphate. The enzyme catalyses beta-D-fructose 1-phosphate = D-glyceraldehyde + dihydroxyacetone phosphate. It participates in carbohydrate degradation; glycolysis; D-glyceraldehyde 3-phosphate and glycerone phosphate from D-glucose: step 4/4. Its pathway is carbohydrate biosynthesis; gluconeogenesis. It functions in the pathway carbohydrate metabolism; fructose metabolism. Functionally, catalyzes the aldol cleavage of fructose 1,6-biphosphate to form two triosephosphates dihydroxyacetone phosphate and D-glyceraldehyde 3-phosphate in glycolysis as well as the reverse stereospecific aldol addition reaction in gluconeogenesis. In fructolysis, metabolizes fructose 1-phosphate derived from the phosphorylation of dietary fructose by fructokinase into dihydroxyacetone phosphate and D-glyceraldehyde. Acts as an adapter independently of its enzymatic activity, exerts a tumor suppressor role by stabilizing the ternary complex with G6PD and TP53 to inhibit G6PD activity and keep oxidative pentose phosphate metabolism in check. The chain is Fructose-bisphosphate aldolase B from Homo sapiens (Human).